Consider the following 284-residue polypeptide: 2-dehydro-3-deoxyphosphooctonate aldolase (284 aa).

Belongs to the KdsA family.

It localises to the cytoplasm. The catalysed reaction is D-arabinose 5-phosphate + phosphoenolpyruvate + H2O = 3-deoxy-alpha-D-manno-2-octulosonate-8-phosphate + phosphate. It functions in the pathway carbohydrate biosynthesis; 3-deoxy-D-manno-octulosonate biosynthesis; 3-deoxy-D-manno-octulosonate from D-ribulose 5-phosphate: step 2/3. Its pathway is bacterial outer membrane biogenesis; lipopolysaccharide biosynthesis. This is 2-dehydro-3-deoxyphosphooctonate aldolase from Burkholderia multivorans (strain ATCC 17616 / 249).